Here is a 37-residue protein sequence, read N- to C-terminus: Large ribosomal subunit protein bL36 (37 aa).

This sequence belongs to the bacterial ribosomal protein bL36 family.

This is Large ribosomal subunit protein bL36 from Synechococcus sp. (strain WH7803).